The sequence spans 257 residues: tRNA (guanine-N(7)-)-methyltransferase (257 aa).

The segment covering 1–12 (MARDSEDQDMET) has biased composition (acidic residues). The disordered stretch occupies residues 1-25 (MARDSEDQDMETETNGAAEGLDPTS). Residues glycine 80, 103–104 (EI), 138–139 (NA), and leucine 158 contribute to the S-adenosyl-L-methionine site. The active site involves aspartate 161. 236-238 (SEE) contacts S-adenosyl-L-methionine.

It belongs to the class I-like SAM-binding methyltransferase superfamily. TrmB family.

The protein resides in the nucleus. The catalysed reaction is guanosine(46) in tRNA + S-adenosyl-L-methionine = N(7)-methylguanosine(46) in tRNA + S-adenosyl-L-homocysteine. It participates in tRNA modification; N(7)-methylguanine-tRNA biosynthesis. Catalyzes the formation of N(7)-methylguanine at position 46 (m7G46) in tRNA. This chain is tRNA (guanine-N(7)-)-methyltransferase, found in Drosophila ananassae (Fruit fly).